Consider the following 152-residue polypeptide: Transcriptional regulator MraZ (152 aa).

SpoVT-AbrB domains follow at residues 5-52 and 81-124; these read ASAI…PIHE and AHEV…DEQA.

It belongs to the MraZ family. In terms of assembly, forms oligomers.

It localises to the cytoplasm. The protein resides in the nucleoid. The sequence is that of Transcriptional regulator MraZ from Shewanella putrefaciens (strain CN-32 / ATCC BAA-453).